We begin with the raw amino-acid sequence, 320 residues long: Transmembrane protein 41 homolog (320 aa).

A disordered region spans residues 20–72 (GRAKALQEHSPDQVATPLLPQVPPQEQQDLNPQQQQQQQQQQQATPQKQAMSA). The span at 43–68 (PQEQQDLNPQQQQQQQQQQQATPQKQ) shows a compositional bias: low complexity. 6 helical membrane-spanning segments follow: residues 83–103 (VIVA…YAIF), 141–161 (VMFG…PGSL), 173–195 (FPIA…YTLS), 225–242 (LFNY…PNWF), 245–265 (LASP…FCGV), and 289–309 (FSWT…LPGL).

It belongs to the TMEM41 family. As to expression, in embryos, strongly expressed in the nervous system.

The protein resides in the membrane. Its function is as follows. Required in cholinergic neurons, but not in motor neurons, for normal neurotransmitter release by motor neurons. Involved in muscle growth. The protein is Transmembrane protein 41 homolog (stas) of Drosophila melanogaster (Fruit fly).